A 361-amino-acid polypeptide reads, in one-letter code: Ribosomal RNA large subunit methyltransferase M (361 aa).

S-adenosyl-L-methionine is bound by residues Ser187, Cys220–Gly223, Asp239, Asp259, and Asp276. The Proton acceptor role is filled by Lys305.

This sequence belongs to the class I-like SAM-binding methyltransferase superfamily. RNA methyltransferase RlmE family. RlmM subfamily. As to quaternary structure, monomer.

Its subcellular location is the cytoplasm. It catalyses the reaction cytidine(2498) in 23S rRNA + S-adenosyl-L-methionine = 2'-O-methylcytidine(2498) in 23S rRNA + S-adenosyl-L-homocysteine + H(+). In terms of biological role, catalyzes the 2'-O-methylation at nucleotide C2498 in 23S rRNA. This is Ribosomal RNA large subunit methyltransferase M from Shewanella sp. (strain MR-7).